The primary structure comprises 273 residues: Major prion protein homolog (273 aa).

The signal sequence occupies residues 1–24 (MARLLTTCCLLALLLAACTDVALS). Positions 25–121 (KKGKGKPSGG…QKPWKPPKTN (97 aa)) are disordered. 8 repeat units span residues 42 to 47 (RQPSYP), 48 to 53 (RQPGYP), 54 to 59 (HNPGYP), 60 to 65 (HNPGYP), 66 to 71 (HNPGYP), 72 to 77 (HNPGYP), 78 to 83 (HNPGYP), and 84 to 89 (QNPGYP). The 8 X 6 AA tandem repeats of [HR]-[NQ]-P-G-Y-P stretch occupies residues 42–89 (RQPSYPRQPGYPHNPGYPHNPGYPHNPGYPHNPGYPHNPGYPQNPGYP). Residues 51–94 (GYPHNPGYPHNPGYPHNPGYPHNPGYPHNPGYPQNPGYPHNPGY) are compositionally biased toward low complexity. Cu(2+)-binding residues include histidine 66, histidine 72, and histidine 78. Positions 90 and 93 each coordinate Cu(2+). Residues 101–111 (YNPSSGGSYHN) show a composition bias toward polar residues. Cysteine 192 and cysteine 237 are joined by a disulfide. 3 N-linked (GlcNAc...) asparagine glycosylation sites follow: asparagine 194, asparagine 209, and asparagine 218. Serine 248 carries the GPI-anchor amidated serine lipid modification. A propeptide spans 249 to 273 (GIQLHPADTWLAVLLLLLTTLFAMH) (removed in mature form).

Belongs to the prion family. In terms of assembly, monomer and homodimer. Has a tendency to aggregate into amyloid fibrils containing a cross-beta spine, formed by a steric zipper of superposed beta-strands. Soluble oligomers may represent an intermediate stage on the path to fibril formation. Copper binding may promote oligomerization. In terms of tissue distribution, spinal cord and brain.

It localises to the cell membrane. In terms of biological role, its primary physiological function is unclear. Has cytoprotective activity against internal or environmental stresses. May play a role in neuronal development and synaptic plasticity. May be required for neuronal myelin sheath maintenance. May play a role in iron uptake and iron homeostasis. Soluble oligomers are toxic to cultured neuroblastoma cells and induce apoptosis (in vitro). Association with GPC1 (via its heparan sulfate chains) targets PRNP to lipid rafts. Also provides Cu(2+) or Zn(2+) for the ascorbate-mediated GPC1 deaminase degradation of its heparan sulfate side chains. The sequence is that of Major prion protein homolog (PRNP) from Gallus gallus (Chicken).